The chain runs to 65 residues: Peptide ToAcP (65 aa).

Positions 1–24 (MKMKMIVVISILLIVFSLSSKAMS) are cleaved as a signal peptide. The propeptide occupies 25 to 34 (LEDEQESVQR). At alanine 58 the chain carries Alanine amide. A propeptide spanning residues 59-65 (GRFDPAV) is cleaved from the precursor.

In terms of tissue distribution, expressed by the venom gland.

It is found in the secreted. Functionally, helical wheel projections predict no hydrophobic face, suggesting a non-amphipathic peptide. Does not show antifungal activity. This is Peptide ToAcP from Tityus obscurus (Amazonian scorpion).